The following is a 369-amino-acid chain: UDP-3-O-(3-hydroxymyristoyl)glucosamine N-acyltransferase (369 aa).

Residue His-240 is the Proton acceptor of the active site.

The protein belongs to the transferase hexapeptide repeat family. LpxD subfamily. As to quaternary structure, homotrimer.

It catalyses the reaction a UDP-3-O-[(3R)-3-hydroxyacyl]-alpha-D-glucosamine + a (3R)-hydroxyacyl-[ACP] = a UDP-2-N,3-O-bis[(3R)-3-hydroxyacyl]-alpha-D-glucosamine + holo-[ACP] + H(+). It carries out the reaction UDP-3-O-[(3R)-3-hydroxytetradecanoyl]-alpha-D-glucosamine + (3R)-hydroxytetradecanoyl-[ACP] = UDP-2-N,3-O-bis[(3R)-3-hydroxytetradecanoyl]-alpha-D-glucosamine + holo-[ACP] + H(+). It participates in glycolipid biosynthesis; lipid IV(A) biosynthesis; lipid IV(A) from (3R)-3-hydroxytetradecanoyl-[acyl-carrier-protein] and UDP-N-acetyl-alpha-D-glucosamine: step 3/6. Functionally, catalyzes the N-acylation of UDP-3-O-(hydroxytetradecanoyl)glucosamine using 3-hydroxytetradecanoyl-ACP as the acyl donor. Is involved in the biosynthesis of lipid A, a phosphorylated glycolipid that anchors the lipopolysaccharide to the outer membrane of the cell. This is UDP-3-O-(3-hydroxymyristoyl)glucosamine N-acyltransferase from Blochmanniella floridana.